Reading from the N-terminus, the 3102-residue chain is MRLWLGLLAVSNIALGGWNTSEDASIWENYVEDSNYHEFISSESERGLFPNIFNLATNSLITATDTCGQYTAEEYCKLVEHVLLRKTTNTQSPQCDICDANNVHKRHPIEYAIDGTRRWWQSPSLANGLRFEKVNITIDLRQEYQVAYIILKMGNSPRPGTWVLEKSLDGEYYEPWQYYAMQDAECMRQFGIPATTGVPRFQKEDEVHCTSEYSKITPLENGEIHTSLVNGRPGAENTSLELQKFTRARFVRLRLISPRTLNADLMIINKKSDSLDKSVTMRYFYSISDISIGGQCICYGHAESCPSDPVTGQFKCECRHNTCGESCNRCCPLFNQLPWKPGTNSHPNVCQQCQCFNHAHSCVYDDELDRNKWSITPEGVYEGGGRCLECAHNTEGFNCERCKDGYYRPSGLSHYREDACRTCECDPVGSVSDACVRDDQSAENGQKPGDCICKPGFGGRRCERCAPGYRNHPTCEPCPCNRAGSVNFDTCDGASCQCKANVEGIYCDRCKAGTIHLSASNPLGCQPCFCFGHSSTCTQGKWNKAQIINNIGWHLTDLTGGKDVKPEVENGEVLMFNANQNQDRSLYYWKAPDSFKGNMLNSYGGYLHYDVYYVPTEQGATVFVADVAIEGNGIKIEYHSRIEFLPREKMTVAIPMSELSGWYNAEARSPVDKADMMRALANVDRFTVRATYHQPQLQSSIFGLSLDTAVPAPDEIVEEDTSLKALAYHTQDTLMGGVEVCECPENFAGNSCESCVPGYRRVNNQLYGGRCEKCDCHGNSEECDPFTGECLNCRHNTTGSRCELCKPGHVGNPSRGGELGACEQCECPSLDLNPNPECISTELAVLGSVASNEDNYVCINCPLGYEGNKCEYCSDGFFEDPLTGKCIECTCNGNIDPMGIGNCDSETGKCLKCIGHTTGDSCESCKEHHWGNAQLHTCKPCGCHTQGAVNPQCSEENGECECKENYIGAQCDRCKENHGDVENGCPACDCNDTGSIGSDCDQVSGQCNCKQGVFGKQCDQCRPSYFNFTDAGCQFCHCNIYGSIEDGKCDQTTGKCECRENVEGTMCEKCADGYFNITSGDGCEDCGCDPTGSEDVSCNLVTGQCVCKPGVTGLKCDSCLPNFYGLTSEGCTECEPCPAPGQVCDPIDGSCVCPPNTVGEMCENCTTNAWDYHPLNGCKLCDCSDIGSDGGMCNTFTGQCKCKAAYVGLKCDLCTHGFFNFPTCEPCGCNAAGTDPLQCKDGQCLCNEIGECPCKKNVHGTKCDQCGEGTFSLDSSNLKGCTECFCFNRTSNCEQSDLVWQQMYAEDRRAVFQEPWEFYTKKHNINLLREKPSHFNSYPTDATPLYWPLPSTMLGDRTASYNGFLRFKIWNEDNRRGLHGIRPDQQYFRHFPQVIIFGNNRIELEHIPMEINDDGIYKIRLHESEWRVRHSPELTLTRKQMMVALQDTQGIYIRGTYTYPARGDAINIQEVSLDVAVPESKIVAGLSTTKAIGVEKCLGCPQGYTGLSCQNPEVGYYRKKHREYLNQADDIALIGWSEPCSCHGHSQTCNPDTSVCTDCEHNTFGDFCEHCLPGYIGDAREGGANACTKCACPLVENSFSDSCVAVDHGRGYVCNSCKPGYTGQYCETCVAGYYGDPQHIGGTCSPCDCHPDGSLHGACNPLSGQCECKPGVTGRTCSMCQERHAFINRVCTSCDQGCYLPLMETMDTMEEHLGRQNFSGLKPIPWKRVWRIGNESQDLSTFVGGIDKDGEIVKDSKWAKDAFALLDEVNFQMGRSNKSAVSIKQFTGIAEQLILDAQIHYANAFNTTNFLKMFAEHGATTVGGAALDGMLMEAEAHLNATVERGEYVEKRLNRAQQEHKKAEELLKMVTAQKLNETIFEDLKNRIDVLEQWMNDYRETIYDVSKKDTADAERMSLVVGKRINRYKEVSNEIEKLRVEAEDQIAYSRNSIEKARSEELMNMFEDKEKINMTLAELPDLVEQCQNITLLYSQLIDEYDEEYVQTAGRHAEKLEVQAQKIVDRFVDTRTETENPLKASHAYENIVEALKNATEAVDSAAEASEAVSKMLGSEGSESGDANEESLRSQLEKLKNESSLSNVDNSNAVKIVEELKKEKKDLTDRLGHLNELKTSIVKRLGVIKNEASSWDDKHDRMHSILKNGAKTAHERSANVKKESEGIKTEVSAIKAEVEKLMNSTSSGVQEDMEKIRASRTGMEYGAQKLTKVNKLSTANQGRTDKMARNIAILKAKIEQAREKAYQIRLSLNSGERGLCKRSYISPASPSPVNTFHVSYRPLQQVSDAVILVSKTKGRRTQPSEHLAVEIRDKRVVVHWDIGSGKKMITNSHPINYVPSNDRVTWYHIDVLRIGNAVNLTVALKESYDGGFKPRGAPVSVFVGNSKDDNSIFNTIPGETTIDVGTDETVASDIGLTTHKFSGIVGGLRIDEVPLPLWSFESTTGECEGATSPPKTSQRGHLFRDGFANVSMSVSERTMSAITVIFNAFSPNGLLYFRGSEASGDFVAIYLNDGKVMFKINLGGGSVAELTSQNVYNDGKEHTVKAIRTGSEMYLQVDSDADRFNTVITGENTALNIENENHYVAGVPMTLNKEVFGDINWNGFIGCILTVKPSQVGELDLDHPEHSQGKTDGCSQVSGVTDKIIGFPKPGYLITKGISIDNSSTFAFSFRTREENGTLVYQSSKLQKVSKRDSEDDGKGYIAFYLFRGYLVLHFGKDASSRKEVVTFRSSHPYNDGQVHAVFMERNGKIISVKVDDKEIGDSQSLSDETSVGTTSGRLILGGFSDDLKPPNNEIPITSFFIGCISDVFLNMKRVSLAPEKHNAQIGMCSMDDTQGLSPIDDPIDGNGHNGHRKSSKLSFEATNRNYYEVSTQSSHLVMNPNGEETVEKTCETSLGSLQGAVRYGLSKSSHSRINFEAPYPNITDFTVKLSLQTETSNGMIWAWANYKNYTRYIFLDIIDGFATLEVKGHKQPKILKHLGNRINDGQWHDITVEKKNRSLKLIIDSLGPVEMTDCPTPKVMKKRVYVGGVISRHRRQFGLTTPGLDGCIRDFEMNNRIFNNLDEPSTSKNVMPCAKACKLKRSSKRKRNSKN.

The N-terminal stretch at methionine 1–glycine 16 is a signal peptide. Asparagine 19, asparagine 135, and asparagine 237 each carry an N-linked (GlcNAc...) asparagine glycan. The region spanning serine 44–glutamine 295 is the Laminin N-terminal domain. 16 disulfides stabilise this stretch: cysteine 296/cysteine 305, cysteine 298/cysteine 316, cysteine 318/cysteine 327, cysteine 330/cysteine 350, cysteine 353/cysteine 362, cysteine 355/cysteine 387, cysteine 390/cysteine 399, cysteine 402/cysteine 420, cysteine 423/cysteine 435, cysteine 425/cysteine 451, cysteine 453/cysteine 462, cysteine 465/cysteine 475, cysteine 478/cysteine 491, cysteine 480/cysteine 496, cysteine 498/cysteine 507, and cysteine 510/cysteine 525. 4 Laminin EGF-like domains span residues cysteine 296–glutamine 352, cysteine 353–threonine 422, cysteine 423–proline 477, and cysteine 478–proline 527. One can recognise a Laminin IV type A 1 domain in the interval isoleucine 548–valine 740. 31 disulfide bridges follow: cysteine 774/cysteine 783, cysteine 776/cysteine 790, cysteine 793/cysteine 802, cysteine 805/cysteine 822, cysteine 825/cysteine 838, cysteine 827/cysteine 858, cysteine 861/cysteine 870, cysteine 873/cysteine 886, cysteine 889/cysteine 903, cysteine 891/cysteine 910, cysteine 913/cysteine 922, cysteine 925/cysteine 938, cysteine 941/cysteine 953, cysteine 943/cysteine 960, cysteine 962/cysteine 971, cysteine 974/cysteine 985, cysteine 988/cysteine 1000, cysteine 990/cysteine 1007, cysteine 1009/cysteine 1018, cysteine 1021/cysteine 1033, cysteine 1036/cysteine 1049, cysteine 1038/cysteine 1056, cysteine 1058/cysteine 1067, cysteine 1070/cysteine 1083, cysteine 1086/cysteine 1098, cysteine 1088/cysteine 1105, cysteine 1107/cysteine 1116, cysteine 1119/cysteine 1131, cysteine 1134/cysteine 1144, cysteine 1137/cysteine 1151, and cysteine 1153/cysteine 1162. 10 Laminin EGF-like domains span residues cysteine 774–glutamine 824, cysteine 825–glutamate 888, cysteine 889–proline 940, cysteine 941–alanine 987, cysteine 988–phenylalanine 1035, cysteine 1036–aspartate 1085, cysteine 1086–glutamate 1133, cysteine 1134–leucine 1180, cysteine 1181–proline 1226, and cysteine 1227–glutamate 1283. Asparagine 796 is a glycosylation site (N-linked (GlcNAc...) asparagine). The N-linked (GlcNAc...) asparagine glycan is linked to asparagine 991. N-linked (GlcNAc...) asparagine glycosylation occurs at asparagine 1027. Asparagine 1076 carries an N-linked (GlcNAc...) asparagine glycan. The N-linked (GlcNAc...) asparagine glycan is linked to asparagine 1164. Intrachain disulfides connect cysteine 1165–cysteine 1178, cysteine 1181–cysteine 1193, cysteine 1183–cysteine 1200, cysteine 1202–cysteine 1211, cysteine 1214–cysteine 1224, cysteine 1227–cysteine 1246, cysteine 1229–cysteine 1252, cysteine 1254–cysteine 1263, and cysteine 1266–cysteine 1281. Asparagine 1288 carries N-linked (GlcNAc...) asparagine glycosylation. The Laminin IV type A 2 domain occupies glutamine 1295–lysine 1496. Disulfide bonds link cysteine 1540–cysteine 1549, cysteine 1542–cysteine 1556, cysteine 1559–cysteine 1568, cysteine 1571–cysteine 1587, cysteine 1590–cysteine 1603, cysteine 1592–cysteine 1614, cysteine 1617–cysteine 1626, cysteine 1629–cysteine 1644, cysteine 1647–cysteine 1659, cysteine 1649–cysteine 1666, cysteine 1668–cysteine 1677, and cysteine 1680–cysteine 1691. Laminin EGF-like domains are found at residues cysteine 1540–lysine 1589, cysteine 1590–proline 1646, and cysteine 1647–serine 1693. Asparagine 1717, asparagine 1734, asparagine 1777, asparagine 1806, asparagine 1839, asparagine 1875, asparagine 1969, asparagine 1984, and asparagine 2048 each carry an N-linked (GlcNAc...) asparagine glycan. A disordered region spans residues glutamate 2061–serine 2084. 4 N-linked (GlcNAc...) asparagine glycosylation sites follow: asparagine 2091, asparagine 2193, asparagine 2369, and asparagine 2479. 3 consecutive Laminin G-like domains span residues serine 2467–cysteine 2644, aspartate 2652–cysteine 2839, and arginine 2913–cysteine 3088. Residues cysteine 2617 and cysteine 2644 are joined by a disulfide bond. N-linked (GlcNAc...) asparagine glycans are attached at residues asparagine 2672 and asparagine 2686. An intrachain disulfide couples cysteine 2814 to cysteine 2839. Residues asparagine 2932, asparagine 2959, and asparagine 3007 are each glycosylated (N-linked (GlcNAc...) asparagine). A disulfide bridge connects residues cysteine 3058 and cysteine 3088.

In terms of assembly, laminin is a complex glycoprotein, consisting of three different polypeptide chains (alpha, beta, gamma), which are bound to each other by disulfide bonds into a cross-shaped molecule comprising one long and three short arms with globules at each end.

The protein localises to the secreted. It localises to the extracellular space. It is found in the extracellular matrix. The protein resides in the basement membrane. Its function is as follows. Binding to cells via a high affinity receptor, laminin is thought to mediate the attachment, migration and organization of cells into tissues during embryonic development by interacting with other extracellular matrix components. Required to assemble a stable basement membrane and for organizing receptor complexes and cytoskeletal components to the proper cell surfaces. During embryogenesis, does not require the presence of collagen type IV in order to associate with cell surfaces, prior to assembly of the prototypical basement membrane. Plays an important role in muscle contraction of the body. Probably plays a distinct role from the related laminin subunit alpha epi-1. The sequence is that of Laminin subunit alpha lam-3 from Caenorhabditis elegans.